Reading from the N-terminus, the 548-residue chain is Asparagine--tRNA ligase, cytoplasmic (548 aa).

Residues M1 to P25 are disordered. The span at V8 to P25 shows a compositional bias: basic and acidic residues. S61 is modified (phosphoserine). Residues M69–R91 form a disordered region. Basic and acidic residues predominate over residues H71–R91. K244 bears the N6-acetyllysine mark. A Phosphoserine modification is found at S482. An N6-acetyllysine modification is found at K490.

The protein belongs to the class-II aminoacyl-tRNA synthetase family. As to quaternary structure, homodimer.

The protein resides in the cytoplasm. It carries out the reaction tRNA(Asn) + L-asparagine + ATP = L-asparaginyl-tRNA(Asn) + AMP + diphosphate + H(+). In terms of biological role, catalyzes the attachment of asparagine to tRNA(Asn) in a two-step reaction: asparagine is first activated by ATP to form Asn-AMP and then transferred to the acceptor end of tRNA(Asn). In addition to its essential role in protein synthesis, acts as a signaling molecule that induced migration of CCR3-expressing cells. Has an essential role in the development of the cerebral cortex, being required for proper proliferation of radial glial cells. This chain is Asparagine--tRNA ligase, cytoplasmic, found in Homo sapiens (Human).